A 106-amino-acid chain; its full sequence is Antitoxin MazE3 (106 aa).

In terms of assembly, forms a complex with cognate toxin MazF3, possibly with 1:1 stoichiometry.

In terms of biological role, antitoxin component of a type II toxin-antitoxin (TA) system. Upon expression in E.coli and M.smegmatis neutralizes the effect of cognate toxin MazF3. Overexpression of MazE3 alone decreased persister cells formation in M.smegmatis upon challenge with gentamicin or kanamycin. This chain is Antitoxin MazE3 (mazE3), found in Mycobacterium tuberculosis (strain ATCC 25618 / H37Rv).